The chain runs to 379 residues: MHCLGLMSGTSADGVDAVLARFDGPPQRPQWSLLRHHHQSYPLELQRQVVAAGQGAPMPAALWLELAEAITEAQAEAALACDPDAKAELIGCHGQTVWHRPPADEARGASWQMLLAPLLAHRLQRPVVHDFRAADLALGGQGAPLVPRADAALLGSTQGWRALLNLGGIANLTLIPPCSGNDRHAAVLGWDCGPANSLIDLGMRQFTNGAQSFDQGGAMAAQGHADELWIQRWLEEEYFQLAPPKSTGRECFGQADLNRRLKQLGGASAADAIATLTAFSAAVVAQDLEHLRQSVGIAPIELITAGGGSQNPVLIDELRRRCRGAQLDASSSLGVPTEAREALVFALLAWWQERGHPGNVPAVTGASREAVLGVRVNPA.

9–16 (GTSADGVD) lines the ATP pocket.

This sequence belongs to the anhydro-N-acetylmuramic acid kinase family.

It carries out the reaction 1,6-anhydro-N-acetyl-beta-muramate + ATP + H2O = N-acetyl-D-muramate 6-phosphate + ADP + H(+). Its pathway is amino-sugar metabolism; 1,6-anhydro-N-acetylmuramate degradation. The protein operates within cell wall biogenesis; peptidoglycan recycling. Catalyzes the specific phosphorylation of 1,6-anhydro-N-acetylmuramic acid (anhMurNAc) with the simultaneous cleavage of the 1,6-anhydro ring, generating MurNAc-6-P. Is required for the utilization of anhMurNAc either imported from the medium or derived from its own cell wall murein, and thus plays a role in cell wall recycling. This chain is Anhydro-N-acetylmuramic acid kinase, found in Synechococcus sp. (strain CC9605).